Consider the following 275-residue polypeptide: 5'-nucleotidase SurE (275 aa).

A divalent metal cation contacts are provided by D12, D13, S44, and N102.

This sequence belongs to the SurE nucleotidase family. A divalent metal cation serves as cofactor.

The protein resides in the cytoplasm. It catalyses the reaction a ribonucleoside 5'-phosphate + H2O = a ribonucleoside + phosphate. In terms of biological role, nucleotidase that shows phosphatase activity on nucleoside 5'-monophosphates. This is 5'-nucleotidase SurE from Synechococcus sp. (strain RCC307).